The chain runs to 296 residues: dTDP-4-dehydrorhamnose reductase (296 aa).

NADH is bound by residues G10 to I12, D35 to L36, and A59 to T61. NADPH-binding positions include Q11 to I12, D35 to L36, and A59 to T61. T100–D101 contributes to the dTDP-beta-L-rhamnose binding site. 2 residues coordinate NADH: Y124 and K128. The NADPH site is built by Y124 and K128. The Proton donor/acceptor role is filled by Y124. W149 lines the dTDP-beta-L-rhamnose pocket.

Belongs to the dTDP-4-dehydrorhamnose reductase family. In terms of assembly, homodimer. Requires Mg(2+) as cofactor.

The enzyme catalyses dTDP-beta-L-rhamnose + NADP(+) = dTDP-4-dehydro-beta-L-rhamnose + NADPH + H(+). Its pathway is carbohydrate biosynthesis; dTDP-L-rhamnose biosynthesis. Its function is as follows. Involved in the biosynthesis of the dTDP-L-rhamnose which is an important component of lipopolysaccharide (LPS). Catalyzes the reduction of dTDP-6-deoxy-L-lyxo-4-hexulose to yield dTDP-L-rhamnose. RmlD uses NADH and NADPH nearly equally well. The chain is dTDP-4-dehydrorhamnose reductase from Sinorhizobium fredii (strain NBRC 101917 / NGR234).